Here is an 86-residue protein sequence, read N- to C-terminus: Cell division topological specificity factor (86 aa).

Belongs to the MinE family.

Its function is as follows. Prevents the cell division inhibition by proteins MinC and MinD at internal division sites while permitting inhibition at polar sites. This ensures cell division at the proper site by restricting the formation of a division septum at the midpoint of the long axis of the cell. The protein is Cell division topological specificity factor of Shewanella halifaxensis (strain HAW-EB4).